A 140-amino-acid chain; its full sequence is Putative nickel-responsive regulator 3 (140 aa).

4 residues coordinate Ni(2+): His81, His92, His94, and Cys100.

The protein belongs to the transcriptional regulatory CopG/NikR family. Ni(2+) serves as cofactor.

In terms of biological role, transcriptional regulator. The polypeptide is Putative nickel-responsive regulator 3 (Methanosarcina acetivorans (strain ATCC 35395 / DSM 2834 / JCM 12185 / C2A)).